The sequence spans 2235 residues: Bridge-like lipid transfer protein family member 2 (2235 aa).

An N-terminal signal peptide occupies residues 1–31; the sequence is MPLFFSALLVLLLVALSALFLGRWLVVRLAT. Positions 29-108 are transmembrane domain; it reads LATKWCQRKL…LQKVSDLSAP (80 aa). Ser-563 carries the post-translational modification Phosphoserine. Asn-730 carries N-linked (GlcNAc...) asparagine glycosylation. The tract at residues 1495 to 1529 is disordered; sequence PQMPAKKPKRGVPTSASAPPRVNTPSFSGQPDKGS. Positions 1813–1885 form a coiled coil; the sequence is SILHLQEAVR…LNILIRCFKD (73 aa). Phosphoserine occurs at positions 1846, 2090, and 2094. A disordered region spans residues 2074 to 2099; the sequence is GKGVAQGLTRSSGVRRSFRKSPEHPV.

It belongs to the SABRE family. Expressed in pancreas, placenta and up-regulated in breast carcinoma epithelial cells, ductal in situ carcinoma (DCIS), invasive breast carcinoma (IBC) and metastatic breast carcinoma cells (MET).

It localises to the cell membrane. Its subcellular location is the endoplasmic reticulum membrane. The protein localises to the mitochondrion membrane. In terms of biological role, tube-forming lipid transport protein which binds to phosphatidylinositols and affects phosphatidylinositol-4,5-bisphosphate (PtdIns-4,5-P2) distribution. In Homo sapiens (Human), this protein is Bridge-like lipid transfer protein family member 2.